Consider the following 312-residue polypeptide: Ornithine carbamoyltransferase (312 aa).

Carbamoyl phosphate-binding positions include 50–53, Q77, R101, and 128–131; these read STRT and HPCQ. Residues N160, D224, and 228–229 each bind L-ornithine; that span reads SM. Residues 264–265 and R292 contribute to the carbamoyl phosphate site; that span reads CL.

It belongs to the aspartate/ornithine carbamoyltransferase superfamily. OTCase family.

The protein localises to the cytoplasm. The enzyme catalyses carbamoyl phosphate + L-ornithine = L-citrulline + phosphate + H(+). It participates in amino-acid biosynthesis; L-arginine biosynthesis; L-arginine from L-ornithine and carbamoyl phosphate: step 1/3. In terms of biological role, reversibly catalyzes the transfer of the carbamoyl group from carbamoyl phosphate (CP) to the N(epsilon) atom of ornithine (ORN) to produce L-citrulline. This chain is Ornithine carbamoyltransferase, found in Leifsonia xyli subsp. xyli (strain CTCB07).